Reading from the N-terminus, the 320-residue chain is 1-aminocyclopropane-1-carboxylate oxidase 2 (320 aa).

Residues 111–143 (DEYRTAMKDFGKRLENLAEDLLDLLCENLGLEK) adopt a coiled-coil conformation. The Fe2OG dioxygenase domain maps to 156–256 (PTFGTKVSNY…RMSVASFYNP (101 aa)). Fe cation contacts are provided by His-180, Asp-182, and His-237. A 2-oxoglutarate-binding site is contributed by Arg-247.

This sequence belongs to the iron/ascorbate-dependent oxidoreductase family. Requires Fe(2+) as cofactor. It depends on Cu(2+) as a cofactor. In terms of tissue distribution, expressed in vegetative tissues. Constitutively expressed in leaves and blades. In ethylene exposed etiolated seedlings, localized in cells at the outer side of the exaggerated hook in an ethylene-dependent manner and following an ethylene sensitive pattern. Also detected in the root tip when treated by ethylene.

The enzyme catalyses 1-aminocyclopropane-1-carboxylate + L-ascorbate + O2 = ethene + L-dehydroascorbate + hydrogen cyanide + CO2 + 2 H2O. It functions in the pathway alkene biosynthesis; ethylene biosynthesis via S-adenosyl-L-methionine; ethylene from S-adenosyl-L-methionine: step 2/2. In terms of biological role, enzyme involved in the ethylene biosynthesis. Required to mediate the 1-aminocyclopropane-1-carboxylic acid (ACC)-mediated reversion of the ABA-induced inhibition of seed germination via endosperm rupture. May promote stem elongation by maximizing the extensibility cells, possibly by activating ethylene biosynthesis, in response to very-long-chain fatty acids (VLCFAs C20:0 to C30:0). In Arabidopsis thaliana (Mouse-ear cress), this protein is 1-aminocyclopropane-1-carboxylate oxidase 2 (ACO2).